The primary structure comprises 83 residues: Kunitz serine protease inhibitor Pr-mulgin 2 (83 aa).

The N-terminal stretch at Met1–Ser24 is a signal peptide. The BPTI/Kunitz inhibitor domain occupies Cys31–Cys81. Intrachain disulfides connect Cys31–Cys81, Cys40–Cys64, and Cys56–Cys77.

Belongs to the venom Kunitz-type family. In terms of tissue distribution, expressed by the venom gland.

It is found in the secreted. Serine protease inhibitor that acts against trypsin (EC(50)=10 nM, Ki=5nM), chymotrypsin (EC(50)=100 nM, Ki=40 nM), and plasmin (EC(50)=100 nM, Ki=40 nM). This chain is Kunitz serine protease inhibitor Pr-mulgin 2, found in Pseudechis rossignolii (Papuan pigmy mulga snake).